Reading from the N-terminus, the 109-residue chain is Nucleoid-associated protein YbaB (109 aa).

Belongs to the YbaB/EbfC family. As to quaternary structure, homodimer.

It localises to the cytoplasm. It is found in the nucleoid. Binds to DNA and alters its conformation. May be involved in regulation of gene expression, nucleoid organization and DNA protection. This is Nucleoid-associated protein YbaB from Escherichia coli O127:H6 (strain E2348/69 / EPEC).